The primary structure comprises 265 residues: uncharacterized protein (265 aa).

The tract at residues 122–145 (THYRDNGQTPPRDTRPHGGISLGG) is disordered.

This is an uncharacterized protein from Zymomonas mobilis subsp. mobilis (strain ATCC 31821 / ZM4 / CP4).